The sequence spans 249 residues: tRNA (guanine-N(1)-)-methyltransferase (249 aa).

S-adenosyl-L-methionine contacts are provided by residues G113 and 133–138 (IGDFVV).

This sequence belongs to the RNA methyltransferase TrmD family. As to quaternary structure, homodimer.

It is found in the cytoplasm. The catalysed reaction is guanosine(37) in tRNA + S-adenosyl-L-methionine = N(1)-methylguanosine(37) in tRNA + S-adenosyl-L-homocysteine + H(+). Specifically methylates guanosine-37 in various tRNAs. The chain is tRNA (guanine-N(1)-)-methyltransferase from Neisseria gonorrhoeae (strain ATCC 700825 / FA 1090).